The primary structure comprises 149 residues: Calmodulin-1 (149 aa).

Residue A2 is modified to N-acetylalanine. 4 consecutive EF-hand domains span residues 8 to 43 (EQIAEFKEAFSLFDKDGDGCITTKELGTVMRSLGQN), 44 to 79 (PTEAELQDMISEADADQNGTIDFPEFLNLMARKMKD), 81 to 116 (DSEEELKEAFKVFDKDQNGFISAAELRHVMTNLGEK), and 117 to 149 (LTDEEVDEMIREADIDGDGQVNYEEFVRMMLAK). D21, D23, D25, C27, E32, D57, D59, N61, T63, E68, D94, D96, N98, and E105 together coordinate Ca(2+). An N6,N6,N6-trimethyllysine modification is found at K116. Ca(2+) contacts are provided by D130, D132, D134, Q136, and E141.

It belongs to the calmodulin family. High expression in stolon tips and stems, moderate in roots, and very low in leaves. Localized in the meristematic regions of the shoot and root tips, the tip of the developing tuber and the vascular zones of petiole and tuber. Not detected in mesophyll cells.

Its function is as follows. Calmodulin mediates the control of a large number of enzymes, ion channels and other proteins by Ca(2+). Among the enzymes to be stimulated by the calmodulin-Ca(2+) complex are a number of protein kinases and phosphatases. The protein is Calmodulin-1 (PCM1) of Solanum tuberosum (Potato).